Reading from the N-terminus, the 65-residue chain is Small, acid-soluble spore protein Tlp (65 aa).

The protein belongs to the Tlp family.

The protein resides in the spore core. This chain is Small, acid-soluble spore protein Tlp, found in Bacillus cereus (strain B4264).